A 482-amino-acid polypeptide reads, in one-letter code: Glutamate-rich WD repeat-containing protein 1 (482 aa).

Disordered stretches follow at residues 1–75 and 148–180; these read MSSK…WRAG and QLHK…EDKD. 2 stretches are compositionally biased toward acidic residues: residues 27–63 and 157–180; these read NGED…DNDG and EDSD…EDKD. WD repeat units follow at residues 191–231, 294–334, 337–377, 383–423, and 446–482; these read NHNG…KALD, GHTE…PAIT, AHTA…DNSP, YHTG…DTEE, and QGQH…NSEE.

It localises to the nucleus. Its subcellular location is the nucleolus. This chain is Glutamate-rich WD repeat-containing protein 1 (grwd1), found in Dictyostelium discoideum (Social amoeba).